The sequence spans 279 residues: MHPDAQLKAAVKNGFDPNILCQRRLTVVKEPVRTILEKQGTIPADKIVDHVNELRDRAFAVFPYACIGQFSFVELSIAESPYYREMLERVKKGDLLLDLGCAFGQELRQLMFDGAPPTNLYGSDLQQEFLNLGYELFLDQPIFPESQLIAADILDKKSALFVRLQGKLNIVYISLFLHVFDWDKQVTVLENVLDLLAATPGSLIVCRVIACRNQAVLNKTHERMPYYYHDLASWNKLWEEIRTRTSLRLAVDVWEQPDDLVKKHPLPGIYVLGSAIRRH.

Residues 124–125, 152–153, and R244 each bind S-adenosyl-L-methionine; these read DL and DI.

Belongs to the class I-like SAM-binding methyltransferase superfamily. Homodimer.

Its pathway is secondary metabolite biosynthesis; terpenoid biosynthesis. Functionally, methyltransferase; part of the gene cluster that mediates the biosynthesis of calidodehydroaustin, a fungal meroterpenoid. The first step of the pathway is the synthesis of 3,5-dimethylorsellinic acid by the polyketide synthase ausA. 3,5-dimethylorsellinic acid is then prenylated by the polyprenyl transferase ausN. Further epoxidation by the FAD-dependent monooxygenase ausM and cyclization by the probable terpene cyclase ausL lead to the formation of protoaustinoid A. Protoaustinoid A is then oxidized to spiro-lactone preaustinoid A3 by the combined action of the FAD-binding monooxygenases ausB and ausC, and the dioxygenase ausE. Acid-catalyzed keto-rearrangement and ring contraction of the tetraketide portion of preaustinoid A3 by ausJ lead to the formation of preaustinoid A4. The aldo-keto reductase ausK, with the help of ausH, is involved in the next step by transforming preaustinoid A4 into isoaustinone which is in turn hydroxylated by the P450 monooxygenase ausI to form austinolide. The cytochrome P450 monooxygenase ausG modifies austinolide to austinol. Austinol is further acetylated to austin by the O-acetyltransferase ausP, which spontaneously changes to dehydroaustin. The cytochrome P450 monooxygenase ausR then converts dehydroaustin is into 7-dehydrodehydroaustin. The hydroxylation catalyzed by ausR permits the O-acetyltransferase ausQ to add an additional acetyl group to the molecule, leading to the formation of acetoxydehydroaustin. The short chain dehydrogenase ausT catalyzes the reduction of the double bond present between carbon atoms 1 and 2 to convert 7-dehydrodehydroaustin into 1,2-dihydro-7-hydroxydehydroaustin. AusQ catalyzes not only an acetylation reaction but also the addition of the PKS ausV diketide product to 1,2-dihydro-7-hydroxydehydroaustin, forming precalidodehydroaustin. Finally, the iron/alpha-ketoglutarate-dependent dioxygenase converts precalidodehydroaustin into calidodehydroaustin. The protein is Methyltransferase ausD of Aspergillus calidoustus.